The chain runs to 425 residues: DNA replication and repair protein RecF (425 aa).

30 to 37 (GPNGHGKT) is an ATP binding site.

The protein belongs to the RecF family.

It is found in the cytoplasm. In terms of biological role, the RecF protein is involved in DNA metabolism; it is required for DNA replication and normal SOS inducibility. RecF binds preferentially to single-stranded, linear DNA. It also seems to bind ATP. The sequence is that of DNA replication and repair protein RecF from Corynebacterium jeikeium (strain K411).